Reading from the N-terminus, the 208-residue chain is Holliday junction branch migration complex subunit RuvA (208 aa).

A domain I region spans residues 1–64 (MIGKLKGIVD…EDMIRLYGFR (64 aa)). The domain II stretch occupies residues 65 to 143 (SDAEREWFRL…AFAPVDPALV (79 aa)). Positions 144 to 152 (ALTGAVEDR) are flexible linker. Residues 153 to 208 (TAPQPVADAISALVNLGYPQVQASAAIAAALKGLGDGAETVEAKTLIRLGLRELAR) form a domain III region.

It belongs to the RuvA family. As to quaternary structure, homotetramer. Forms an RuvA(8)-RuvB(12)-Holliday junction (HJ) complex. HJ DNA is sandwiched between 2 RuvA tetramers; dsDNA enters through RuvA and exits via RuvB. An RuvB hexamer assembles on each DNA strand where it exits the tetramer. Each RuvB hexamer is contacted by two RuvA subunits (via domain III) on 2 adjacent RuvB subunits; this complex drives branch migration. In the full resolvosome a probable DNA-RuvA(4)-RuvB(12)-RuvC(2) complex forms which resolves the HJ.

It localises to the cytoplasm. Its function is as follows. The RuvA-RuvB-RuvC complex processes Holliday junction (HJ) DNA during genetic recombination and DNA repair, while the RuvA-RuvB complex plays an important role in the rescue of blocked DNA replication forks via replication fork reversal (RFR). RuvA specifically binds to HJ cruciform DNA, conferring on it an open structure. The RuvB hexamer acts as an ATP-dependent pump, pulling dsDNA into and through the RuvAB complex. HJ branch migration allows RuvC to scan DNA until it finds its consensus sequence, where it cleaves and resolves the cruciform DNA. This Methylorubrum populi (strain ATCC BAA-705 / NCIMB 13946 / BJ001) (Methylobacterium populi) protein is Holliday junction branch migration complex subunit RuvA.